We begin with the raw amino-acid sequence, 277 residues long: Anamorsin homolog (277 aa).

The N-terminal SAM-like domain stretch occupies residues 1–134 (MALQGNVAIL…PFYPEFSDAV (134 aa)). The interval 135–191 (SFTSKKQSFESAAIPLAVKSTTTQPIKKWTVLADDFGDDQDDDIIDEDTLLDDTDEV) is linker. [2Fe-2S] cluster contacts are provided by C199, C210, C213, and C215. The tract at residues 199–215 (CGDAVGGKKRACKNCTC) is fe-S binding site A. C238, C241, C249, and C252 together coordinate [4Fe-4S] cluster. Short sequence motifs (cx2C motif) lie at residues 238-241 (CGNC) and 249-252 (CGSC). The tract at residues 238–252 (CGNCFKGDAFRCGSC) is fe-S binding site B.

The protein belongs to the anamorsin family. Monomer. [2Fe-2S] cluster is required as a cofactor. [4Fe-4S] cluster serves as cofactor.

The protein localises to the cytoplasm. The protein resides in the mitochondrion intermembrane space. In terms of biological role, component of the cytosolic iron-sulfur (Fe-S) protein assembly (CIA) machinery. Required for the maturation of extramitochondrial Fe-S proteins. Part of an electron transfer chain functioning in an early step of cytosolic Fe-S biogenesis, facilitating the de novo assembly of a [4Fe-4S] cluster on the cytosolic Fe-S scaffold complex. Electrons are transferred from NADPH via a FAD- and FMN-containing diflavin oxidoreductase. Together with the diflavin oxidoreductase, also required for the assembly of the diferric tyrosyl radical cofactor of ribonucleotide reductase (RNR), probably by providing electrons for reduction during radical cofactor maturation in the catalytic small subunit. This Phytophthora infestans (strain T30-4) (Potato late blight agent) protein is Anamorsin homolog.